The primary structure comprises 348 residues: Phenylalanine--tRNA ligase alpha subunit (348 aa).

Glutamate 268 serves as a coordination point for Mg(2+).

This sequence belongs to the class-II aminoacyl-tRNA synthetase family. Phe-tRNA synthetase alpha subunit type 1 subfamily. In terms of assembly, tetramer of two alpha and two beta subunits. Mg(2+) serves as cofactor.

It localises to the cytoplasm. It carries out the reaction tRNA(Phe) + L-phenylalanine + ATP = L-phenylalanyl-tRNA(Phe) + AMP + diphosphate + H(+). The chain is Phenylalanine--tRNA ligase alpha subunit from Bordetella parapertussis (strain 12822 / ATCC BAA-587 / NCTC 13253).